Here is a 923-residue protein sequence, read N- to C-terminus: Transportin-3 (923 aa).

An N-acetylmethionine modification is found at Met1. Phosphoserine is present on Ser74. His242 and Thr896 each carry phosphothreonine.

Interacts with (GTP-bound) Ran. Interacts with (phosphorylated) SFRS1 and SFRS2; leading to their nuclear import. Interacts with NUP62. Interacts with RBM4. Interacts with CPSF6, promoting its nuclear import.

It is found in the nucleus envelope. The protein resides in the cytoplasm. Its function is as follows. Importin, which transports target proteins into the nucleus. Specifically mediates the nuclear import of splicing factor serine/arginine (SR) proteins, such as RBM4, SFRS1 and SFRS2, by recognizing phosphorylated SR domains. Also mediates the nuclear import of serine/arginine (SR) protein CPSF6, independently of CPSF6 phosphorylation. The nuclear import process is regulated by the small GTPase Ran that partitions between cytoplasm and nucleus in the predominantly GDP- and GTP-bound form, respectively. Importin associates with target cargo proteins in the cytoplasm, and the competitive binding of GTP-bound Ran induces the release of cargos in the nucleus. This chain is Transportin-3, found in Mus musculus (Mouse).